Reading from the N-terminus, the 815-residue chain is Vacuolar proton translocating ATPase 100 kDa subunit (815 aa).

Over 1-402 (MSFLRPSIWR…NAYGIAHYRE (402 aa)) the chain is Cytoplasmic. A helical membrane pass occupies residues 403–421 (VNPAVLTIVTFPFLFGVMF). At 422–423 (GD) the chain is on the vacuolar side. The helical transmembrane segment at 424-440 (VGHGALLLLSALGLISL) threads the bilayer. Residues 441–454 (EKKLAGKKLNELIQ) lie on the Cytoplasmic side of the membrane. A helical membrane pass occupies residues 455–484 (MPFDGRYVLFLMSLFSIYVGFIYNECFSIP). Over 485–530 (MNIFGSQYNLNSTTGLYTYQHTDRVYPVGVDPLWKGAPNELVYYNS) the chain is Vacuolar. Residues 531 to 550 (FKMKLSIIFGVVQMSVGICF) traverse the membrane as a helical segment. Over 551–571 (SLLNYLNQKGPIKIVNILTQF) the chain is Cytoplasmic. A helical transmembrane segment spans residues 572-592 (VPQMIFLWSIFGYMSVLIILK). Over 593–639 (WVVPYRSFEVDKVDPPFILPTIIAMFLSPGGTPDVVFFSGQGAVQTA) the chain is Vacuolar. A helical transmembrane segment spans residues 640–659 (LLFLALISIPVMLVIKPLFM). The Cytoplasmic segment spans residues 660 to 706 (KRFHFQEVERKKLGHHEEEHDDEALYTGHHGEEFEMGEVFVHQVIHT). A helical transmembrane segment spans residues 707–731 (IEFVLGAVSNTASYLRLWALSLAHS). Residues 732–749 (ELSSVFWERILIGQVERG) lie on the Vacuolar side of the membrane. Residues 750 to 788 (NPFLAFVGFGAWLGASVAVLLLMESLSAFLHALRLHWVE) form a helical membrane-spanning segment. Topologically, residues 789–815 (FQNKFYIGDGVRFIPYSATRILSEDDE) are cytoplasmic.

The protein belongs to the V-ATPase 116 kDa subunit family. The V-ATPase is a heteromultimeric enzyme.

It is found in the cytoplasmic vesicle membrane. Its subcellular location is the endosome membrane. It localises to the vacuole membrane. The protein resides in the lysosome membrane. Functionally, essential component of the vacuolar proton pump (V-ATPase), a multimeric enzyme that catalyzes the translocation of protons across the membranes. Required for assembly and activity of the V-ATPase. Required in both the contractile vacuole system and the endosomal/lysosomal system. Also required for cytosolic pH regulation. The polypeptide is Vacuolar proton translocating ATPase 100 kDa subunit (vatM) (Dictyostelium discoideum (Social amoeba)).